The primary structure comprises 230 residues: Phosphoribosylaminoimidazole-succinocarboxamide synthase (230 aa).

This sequence belongs to the SAICAR synthetase family.

The enzyme catalyses 5-amino-1-(5-phospho-D-ribosyl)imidazole-4-carboxylate + L-aspartate + ATP = (2S)-2-[5-amino-1-(5-phospho-beta-D-ribosyl)imidazole-4-carboxamido]succinate + ADP + phosphate + 2 H(+). It functions in the pathway purine metabolism; IMP biosynthesis via de novo pathway; 5-amino-1-(5-phospho-D-ribosyl)imidazole-4-carboxamide from 5-amino-1-(5-phospho-D-ribosyl)imidazole-4-carboxylate: step 1/2. This chain is Phosphoribosylaminoimidazole-succinocarboxamide synthase, found in Thermotoga petrophila (strain ATCC BAA-488 / DSM 13995 / JCM 10881 / RKU-1).